The primary structure comprises 358 residues: MTAMLTLETMASEEEYGPRNCVVCGDRATGYHFHALTCEGCKGFFRRTVSKTIGPICPFAGRCEVSKAQRRHCPACRLQKCLNVGMRKDMILSAEALALRRARQAQRRAEKASLQLNQQQKELVQILLGAHTRHVGPMFDQFVQFKPPAYLFMHHRPFQPRGPVLPLLTHFADINTFMVQQIIKFTKDLPLFRSLTMEDQISLLKGAAVEILHISLNTTFCLQTENFFCGPLCYKMEDAVHAGFQYEFLESILHFHKNLKGLHLQEPEYVLMAATALFSPDRPGVTQREEIDQLQEEMALILNNHIMEQQSRLQSRFLYAKLMGLLADLRSINNAYSYELQRLEELSAMTPLLGEICS.

The nuclear receptor DNA-binding region spans 18-93 (PRNCVVCGDR…VGMRKDMILS (76 aa)). The segment at 21–41 (CVVCGDRATGYHFHALTCEGC) adopts an NR C4-type zinc-finger fold. A Phosphothreonine; by PKC modification is found at threonine 48. The NR C4-type zinc finger occupies 57–81 (CPFAGRCEVSKAQRRHCPACRLQKC). In terms of domain architecture, NR LBD spans 119–358 (QQKELVQILL…MTPLLGEICS (240 aa)).

Belongs to the nuclear hormone receptor family. NR1 subfamily. Heterodimer of NR1I3 and RXR. Interacts with PSMC4. Interacts with ECT2. Directly interacts with DNAJC7; this complex may also include HSP90. Interacts with CRY1. Interacts with CRY2 in a ligand-dependent manner. Phosphorylated at Thr-48 by PKC, dephosphorylation of Thr-48 is required for nuclear translocation and activation. As to expression, predominantly expressed in liver.

The protein resides in the nucleus. The protein localises to the cytoplasm. Its subcellular location is the cytoskeleton. Its function is as follows. Binds and transactivates the retinoic acid response elements that control expression of the retinoic acid receptor beta 2 and alcohol dehydrogenase 3 genes. Transactivates both the phenobarbital responsive element module of the human CYP2B6 gene and the CYP3A4 xenobiotic response element. The sequence is that of Nuclear receptor subfamily 1 group I member 3 (Nr1i3) from Mus musculus (Mouse).